We begin with the raw amino-acid sequence, 122 residues long: Large ribosomal subunit protein uL14 (122 aa).

It belongs to the universal ribosomal protein uL14 family. In terms of assembly, part of the 50S ribosomal subunit. Forms a cluster with proteins L3 and L19. In the 70S ribosome, L14 and L19 interact and together make contacts with the 16S rRNA in bridges B5 and B8.

Its function is as follows. Binds to 23S rRNA. Forms part of two intersubunit bridges in the 70S ribosome. The protein is Large ribosomal subunit protein uL14 of Cyanothece sp. (strain PCC 7425 / ATCC 29141).